We begin with the raw amino-acid sequence, 594 residues long: Protein REBELOTE (594 aa).

Residues 1–13 show a composition bias toward basic residues; the sequence is MGKLGKKARKFAK. Disordered regions lie at residues 1 to 21 and 35 to 58; these read MGKL…SVEK and AKRN…PKKR. 3 consecutive short sequence motifs (nuclear localization signal) follow at residues 8 to 15, 35 to 42, and 512 to 519; these read ARKFAKKN, AKRNERHQ, and LKKFHERS. Residues 36 to 58 show a composition bias toward basic and acidic residues; the sequence is KRNERHQAGDKQEKKVEQQPKKR.

It belongs to the NOC2 family. In terms of assembly, interacts with SWA2, NOC2 and NOC3 in both the nucleolus and nucleoplasm. Binds to ENAP1 and OBE1. Expressed at low levels in roots, shoots, leaves, stems, inflorescences, flowers and siliques, with highest levels dividing tissues.

The protein resides in the nucleus. It localises to the nucleolus. It is found in the nucleoplasm. Collaboratively with CYP40/SQN and ULT1, influences floral meristem (FM) determinacy in an AGAMOUS and SUPERMAN-dependent manner, thus contributing to the floral developmental homeostasis. The chain is Protein REBELOTE from Arabidopsis thaliana (Mouse-ear cress).